Here is a 571-residue protein sequence, read N- to C-terminus: Cationic amino acid transporter 8 (571 aa).

Asn-35 is a glycosylation site (N-linked (GlcNAc...) asparagine). 6 helical membrane passes run 39–59 (FWLLVIIVIYTATSACIYFDW), 94–114 (SLYPITLAIHFTMSVFCGFLY), 117–137 (IGPKFTAIIGQMCNIMSWVFL), 148–168 (FLSFVFLGLGADTAFIPILTI), 177–197 (TFILTVVGAAASLSYAVPATL), and 217–237 (IFLILVPCLLVATFLLPLMPF). Residues Asn-298, Asn-325, and Asn-346 are each glycosylated (N-linked (GlcNAc...) asparagine). Residues 365-385 (LFFKVLLSYPSICIIVYFILF) form a helical membrane-spanning segment. A glycan (N-linked (GlcNAc...) asparagine) is linked at Asn-386. Transmembrane regions (helical) follow at residues 405-425 (SIINIINILMPISCIPCIIFG), 433-453 (SAIIIILMNAFSALMHLTALI), 461-481 (VSAFLYMCVTSIYTSQIYCFI), 488-508 (VVFGKLLGFASLCGGLFSLLC), and 528-548 (VVLLLVIAFILMFLPLTVLYF).

This sequence belongs to the SLC43A transporter (TC 2.A.1.44) family.

The protein resides in the membrane. It catalyses the reaction L-arginine(in) = L-arginine(out). In terms of biological role, sodium-independent cationic amino acid transporter. Transports L-arginine, L-lysine, L-histidine and L-ornithine. In Plasmodium vivax (strain Salvador I), this protein is Cationic amino acid transporter 8.